Reading from the N-terminus, the 254-residue chain is Indole-3-glycerol phosphate synthase (254 aa).

It belongs to the TrpC family.

It catalyses the reaction 1-(2-carboxyphenylamino)-1-deoxy-D-ribulose 5-phosphate + H(+) = (1S,2R)-1-C-(indol-3-yl)glycerol 3-phosphate + CO2 + H2O. It participates in amino-acid biosynthesis; L-tryptophan biosynthesis; L-tryptophan from chorismate: step 4/5. In Methanopyrus kandleri (strain AV19 / DSM 6324 / JCM 9639 / NBRC 100938), this protein is Indole-3-glycerol phosphate synthase.